A 208-amino-acid polypeptide reads, in one-letter code: Guanylate kinase (208 aa).

Residues 4–185 (GNLYILSAPS…ALADLVHILR (182 aa)) form the Guanylate kinase-like domain. 11-18 (APSGAGKS) lines the ATP pocket.

This sequence belongs to the guanylate kinase family.

The protein localises to the cytoplasm. It carries out the reaction GMP + ATP = GDP + ADP. Essential for recycling GMP and indirectly, cGMP. The polypeptide is Guanylate kinase (Mannheimia succiniciproducens (strain KCTC 0769BP / MBEL55E)).